The sequence spans 95 residues: uncharacterized protein (95 aa).

The N-terminal stretch at 1–21 (MKKITLFFTALLCLFSTSVLA) is a signal peptide.

This is an uncharacterized protein from Haemophilus influenzae (strain ATCC 51907 / DSM 11121 / KW20 / Rd).